The following is a 599-amino-acid chain: Elongation factor 4 (599 aa).

The tr-type G domain maps to 5–187; sequence SHIRNFSIIA…RLVHTIPAPV (183 aa). GTP-binding positions include 17–22 and 134–137; these read DHGKST and NKMD.

This sequence belongs to the TRAFAC class translation factor GTPase superfamily. Classic translation factor GTPase family. LepA subfamily.

The protein localises to the cell inner membrane. It catalyses the reaction GTP + H2O = GDP + phosphate + H(+). Its function is as follows. Required for accurate and efficient protein synthesis under certain stress conditions. May act as a fidelity factor of the translation reaction, by catalyzing a one-codon backward translocation of tRNAs on improperly translocated ribosomes. Back-translocation proceeds from a post-translocation (POST) complex to a pre-translocation (PRE) complex, thus giving elongation factor G a second chance to translocate the tRNAs correctly. Binds to ribosomes in a GTP-dependent manner. This Pseudomonas putida (strain W619) protein is Elongation factor 4.